The primary structure comprises 388 residues: Adenosine deaminase-like protein (388 aa).

The segment covering 1–13 (MPNNSKHKKKQQR) has biased composition (basic residues). Residues 1–34 (MPNNSKHKKKQQRRQQEAQKKSRAKQIETDKKND) form a disordered region. A compositionally biased stretch (basic and acidic residues) spans 14-34 (RQQEAQKKSRAKQIETDKKND). 2 residues coordinate Zn(2+): H65 and H67. N(6)-methyl-AMP contacts are provided by residues H67, H114, 146–149 (TSPK), D186, and G218. H245 is a Zn(2+) binding site. 3 residues coordinate N(6)-methyl-AMP: E248, D326, and D327. Catalysis depends on E248, which acts as the Proton donor. D326 is a binding site for Zn(2+).

This sequence belongs to the metallo-dependent hydrolases superfamily. Adenosine and AMP deaminases family. In terms of assembly, monomer. The cofactor is Zn(2+).

It carries out the reaction N(6)-methyl-AMP + H2O + H(+) = IMP + methylamine. Its function is as follows. Catalyzes the hydrolysis of the free cytosolic methylated adenosine nucleotide N(6)-methyl-AMP (N6-mAMP) to produce inositol monophosphate (IMP) and methylamine. Is required for the catabolism of cytosolic N6-mAMP, which is derived from the degradation of mRNA containing N6-methylated adenine (m6A). The polypeptide is Adenosine deaminase-like protein (Caenorhabditis elegans).